Here is a 167-residue protein sequence, read N- to C-terminus: Small ribosomal subunit protein uS5 (167 aa).

The 64-residue stretch at leucine 12 to valine 75 folds into the S5 DRBM domain.

Belongs to the universal ribosomal protein uS5 family. In terms of assembly, part of the 30S ribosomal subunit. Contacts proteins S4 and S8.

Its function is as follows. With S4 and S12 plays an important role in translational accuracy. Functionally, located at the back of the 30S subunit body where it stabilizes the conformation of the head with respect to the body. In Shewanella baltica (strain OS223), this protein is Small ribosomal subunit protein uS5.